A 732-amino-acid polypeptide reads, in one-letter code: Translation initiation factor IF-2 (732 aa).

The disordered stretch occupies residues 40–147; the sequence is PEVVEKLDHT…QQEQPMKKEK (108 aa). Over residues 42 to 67 the composition is skewed to basic and acidic residues; sequence VVEKLDHTYNKKNERPQASAPKEKQK. The span at 90-103 shows a compositional bias: basic residues; that stretch reads KVPKKKSANKKKEG. A compositionally biased stretch (basic and acidic residues) spans 104–117; it reads KKHDLQLQQQEKKI. Residues 118–129 show a composition bias toward basic residues; that stretch reads FHQQKKKIKGKA. Residues 233–402 form the tr-type G domain; sequence ERPPVVTIMG…LLVSEMEELK (170 aa). The tract at residues 242–249 is G1; it reads GHVDHGKT. GTP is bound at residue 242–249; that stretch reads GHVDHGKT. The segment at 267–271 is G2; the sequence is GITQH. Residues 288–291 form a G3 region; sequence DTPG. Residues 288–292 and 342–345 each bind GTP; these read DTPGH and NKMD. Positions 342–345 are G4; the sequence is NKMD. Residues 378–380 form a G5 region; that stretch reads SAK.

Belongs to the TRAFAC class translation factor GTPase superfamily. Classic translation factor GTPase family. IF-2 subfamily.

It is found in the cytoplasm. In terms of biological role, one of the essential components for the initiation of protein synthesis. Protects formylmethionyl-tRNA from spontaneous hydrolysis and promotes its binding to the 30S ribosomal subunits. Also involved in the hydrolysis of GTP during the formation of the 70S ribosomal complex. The polypeptide is Translation initiation factor IF-2 (Geobacillus sp. (strain WCH70)).